Reading from the N-terminus, the 861-residue chain is Extra-large guanine nucleotide-binding protein 2 (861 aa).

Disordered stretches follow at residues 1–32 and 121–168; these read MAAV…TSSG and VSGS…DDRV. Basic and acidic residues predominate over residues 131–143; it reads KRLDVPEEVKSPA. Residues 146–156 are compositionally biased toward low complexity; that stretch reads RLSPSSPLSAS. Basic and acidic residues predominate over residues 157 to 168; it reads AREEDHLDDDRV. The Nuclear localization signal signature appears at 204–211; sequence RAERKGKR. Residues 214-257 form an RING-type; degenerate zinc finger; that stretch reads CYRCQLGNRFTEKEVCIVCDAKYCFNCVRRAMGAMPEGRKCQAC. Residues 461 to 853 enclose the G-alpha domain; that stretch reads MLNKLLLIGS…TSMFQEMSTT (393 aa). The tract at residues 464–477 is G1 motif; the sequence is KLLLIGSEKGGATT. 469–477 is a binding site for GTP; the sequence is GSEKGGATT. Thr-476 is a Ca(2+) binding site. Residues 523 to 545 are disordered; sequence EMSNDQSSGNVGDETSAKPGNSI. 624-632 lines the GTP pocket; sequence DILQAEGLS. The interval 624-632 is G2 motif; that stretch reads DILQAEGLS. Position 632 (Ser-632) interacts with Ca(2+). The segment at 665 to 674 is G3 motif; it reads YQLIRLNPRS. The segment at 737-744 is G4 motif; that stretch reads LLVLTKFD. 741-744 contributes to the GTP binding site; sequence TKFD. The segment at 818-823 is G5 motif; sequence QVSLES.

It belongs to the G-alpha family. XLG subfamily. Interacts with GB1. Component of a G-protein complex at least composed of XLG2 and GB1. Interacts with RTV1. Ca(2+) serves as cofactor. Ubiquitous. Strongly expressed in vascular tissues, root and shoot meristems and lateral root primordia.

It localises to the nucleus. Its function is as follows. Guanine nucleotide-binding proteins (G proteins) are involved as modulators or transducers in various transmembrane signaling systems. Binds GTP with specificity. Plays a role in the root morphogenesis by regulation of the cell proliferation. Acts as a positive regulator in resistance to pathogen that triggers the salicylic acid (SA) pathway. Promotes the DNA binding activity of RTV1 specifically to promoter regions of FT and SOC1 in vivo leading to the activation of floral integrator genes. The protein is Extra-large guanine nucleotide-binding protein 2 (XLG2) of Arabidopsis thaliana (Mouse-ear cress).